The sequence spans 587 residues: Folylpolyglutamate synthase, mitochondrial (587 aa).

A mitochondrion-targeting transit peptide spans 1–42 (MSWARSRLCSTLSLAAVSARGATTEGAARRGMSAWPAPQEPG). 106 to 109 (GKGS) serves as a coordination point for ATP. The Mg(2+) site is built by Ser130, Glu200, and His228. Positions 363 and 377 each coordinate ATP. Ser539 carries the post-translational modification Phosphoserine.

It belongs to the folylpolyglutamate synthase family. As to quaternary structure, monomer. A monovalent cation serves as cofactor. As to expression, with non-specific probe, highest content in kidney and liver and lowest in spleen, lung and small intestine, and readily detectable in all of the tumors except hepatoma. Isoform 1 and isoform 2 expressed in leukemic cells and isoform 4 and isoform 5 in liver cells. Isoform 1 and isoform 2 exclusively expressed in hepatoma and Lewis lung carcinoma. Isoform 1 and isoform 2 also expressed in bone marrow, small intestine and spleen. Kidney expresses isoform 1, isoform 2, isoform 4 and isoform 5.

It localises to the mitochondrion inner membrane. Its subcellular location is the mitochondrion matrix. The protein resides in the cytoplasm. The catalysed reaction is (6S)-5,6,7,8-tetrahydrofolyl-(gamma-L-Glu)(n) + L-glutamate + ATP = (6S)-5,6,7,8-tetrahydrofolyl-(gamma-L-Glu)(n+1) + ADP + phosphate + H(+). The protein operates within cofactor biosynthesis; tetrahydrofolylpolyglutamate biosynthesis. Its activity is regulated as follows. Inhibited by ammonium sulfate. Inhibited by pentaglutamate derivative of DDATHF, but isoform 2 is inhibited to a greater extent at lower concentrations of the compound that is isoform 5. Isoform 5 is virtually unaffected by H(4)PteGlu(5) and 5,10-CH(2)-H(4)PteGlu(5) at concentrations that substantially inhibits the activity of isoform 2. Isoform 2 and 5 are equally sensitive to polyglutamates of 10-CHO-H(4)-PteGlu. Its function is as follows. Catalyzes conversion of folates to polyglutamate derivatives allowing concentration of folate compounds in the cell and the intracellular retention of these cofactors, which are important substrates for most of the folate-dependent enzymes that are involved in one-carbon transfer reactions involved in purine, pyrimidine and amino acid synthesis. Dihydrofolate, tetrahydrofolate, 5,10-methylenetetrahydrofolate, 10-formyltetrahydrofolate and 5-formyltetrahydrofolate are the best substrates. Folic acid and 5-methyltetrahydrofolate can also act as substrates. In Mus musculus (Mouse), this protein is Folylpolyglutamate synthase, mitochondrial (Fpgs).